Here is a 272-residue protein sequence, read N- to C-terminus: Aurora kinase (272 aa).

The Protein kinase domain occupies 10–263; it reads FEIGRLLGRG…LTEALNHPFI (254 aa). Residues 16-24 and K39 each bind ATP; that span reads LGRGKFGQV. The active-site Proton acceptor is the D134.

The protein belongs to the protein kinase superfamily. Ser/Thr protein kinase family. Aurora subfamily.

It is found in the nucleus. The protein resides in the cytoplasm. It localises to the cytoskeleton. Its subcellular location is the spindle. The protein localises to the chromosome. It is found in the centromere. The protein resides in the kinetochore. It carries out the reaction L-seryl-[protein] + ATP = O-phospho-L-seryl-[protein] + ADP + H(+). The catalysed reaction is L-threonyl-[protein] + ATP = O-phospho-L-threonyl-[protein] + ADP + H(+). In terms of biological role, component of the chromosomal passenger complex (CPC), a complex that acts as a key regulator of chromosome segregation and cytokinesis. Has a role in error-correction of aberrent kinetochore-microtubule attachments to ensure that sister kinetochores become bioriented and connect to opposite poles by promoting spindle assembly checkpoint signaling. The chain is Aurora kinase (IPL1) from Encephalitozoon cuniculi (strain GB-M1) (Microsporidian parasite).